We begin with the raw amino-acid sequence, 63 residues long: Large ribosomal subunit protein uL29 (63 aa).

It belongs to the universal ribosomal protein uL29 family.

In Escherichia coli O8 (strain IAI1), this protein is Large ribosomal subunit protein uL29.